A 628-amino-acid polypeptide reads, in one-letter code: 1-deoxy-D-xylulose-5-phosphate synthase (628 aa).

Residues H72 and 113-115 (GHS) contribute to the thiamine diphosphate site. D144 lines the Mg(2+) pocket. Residues 145 to 146 (GA), N173, Y284, and E363 contribute to the thiamine diphosphate site. N173 contacts Mg(2+).

Belongs to the transketolase family. DXPS subfamily. Homodimer. It depends on Mg(2+) as a cofactor. Requires thiamine diphosphate as cofactor.

The catalysed reaction is D-glyceraldehyde 3-phosphate + pyruvate + H(+) = 1-deoxy-D-xylulose 5-phosphate + CO2. The protein operates within metabolic intermediate biosynthesis; 1-deoxy-D-xylulose 5-phosphate biosynthesis; 1-deoxy-D-xylulose 5-phosphate from D-glyceraldehyde 3-phosphate and pyruvate: step 1/1. Functionally, catalyzes the acyloin condensation reaction between C atoms 2 and 3 of pyruvate and glyceraldehyde 3-phosphate to yield 1-deoxy-D-xylulose-5-phosphate (DXP). This Brevibacillus brevis (strain 47 / JCM 6285 / NBRC 100599) protein is 1-deoxy-D-xylulose-5-phosphate synthase.